Here is an 842-residue protein sequence, read N- to C-terminus: Molybdenum cofactor sulfurase (842 aa).

The residue at position 236 (K236) is an N6-(pyridoxal phosphate)lysine. C402 is a catalytic residue. Residues 637–680 are disordered; sequence PGSQHGDAQRSSKARLQKHQITTDQESDVQEVHPGSGTTTDSTW. Positions 663 to 831 constitute an MOSC domain; that stretch reads SDVQEVHPGS…AARGDVAYPT (169 aa).

Belongs to the class-V pyridoxal-phosphate-dependent aminotransferase family. MOCOS subfamily. Pyridoxal 5'-phosphate is required as a cofactor.

The catalysed reaction is Mo-molybdopterin + L-cysteine + AH2 = thio-Mo-molybdopterin + L-alanine + A + H2O. The protein operates within cofactor biosynthesis; molybdopterin biosynthesis. Functionally, sulfurates the molybdenum cofactor. Sulfation of molybdenum is essential for xanthine dehydrogenase (XDH) and aldehyde oxidase (ADO) enzymes in which molybdenum cofactor is liganded by 1 oxygen and 1 sulfur atom in active form. The sequence is that of Molybdenum cofactor sulfurase from Pyricularia oryzae (strain 70-15 / ATCC MYA-4617 / FGSC 8958) (Rice blast fungus).